Here is a 196-residue protein sequence, read N- to C-terminus: Large ribosomal subunit protein bL25 (196 aa).

Belongs to the bacterial ribosomal protein bL25 family. CTC subfamily. As to quaternary structure, part of the 50S ribosomal subunit; part of the 5S rRNA/L5/L18/L25 subcomplex. Contacts the 5S rRNA. Binds to the 5S rRNA independently of L5 and L18.

Its function is as follows. This is one of the proteins that binds to the 5S RNA in the ribosome where it forms part of the central protuberance. This chain is Large ribosomal subunit protein bL25, found in Bacteroides fragilis (strain ATCC 25285 / DSM 2151 / CCUG 4856 / JCM 11019 / LMG 10263 / NCTC 9343 / Onslow / VPI 2553 / EN-2).